The sequence spans 701 residues: Elongation factor G (701 aa).

Residues 8-291 (SRYRNIGIVA…AVIDYLPAPI (284 aa)) form the tr-type G domain. Residues 17-24 (AHVDAGKT), 89-93 (DTPGH), and 143-146 (NKMD) contribute to the GTP site.

This sequence belongs to the TRAFAC class translation factor GTPase superfamily. Classic translation factor GTPase family. EF-G/EF-2 subfamily.

Its subcellular location is the cytoplasm. Catalyzes the GTP-dependent ribosomal translocation step during translation elongation. During this step, the ribosome changes from the pre-translocational (PRE) to the post-translocational (POST) state as the newly formed A-site-bound peptidyl-tRNA and P-site-bound deacylated tRNA move to the P and E sites, respectively. Catalyzes the coordinated movement of the two tRNA molecules, the mRNA and conformational changes in the ribosome. The sequence is that of Elongation factor G from Pseudomonas syringae pv. tomato (strain ATCC BAA-871 / DC3000).